A 276-amino-acid chain; its full sequence is Glutamate 5-kinase (276 aa).

Lysine 14 is an ATP binding site. Serine 54, aspartate 141, and asparagine 157 together coordinate substrate. Residues 177–178 (SD) and 219–225 (TGGMLTK) contribute to the ATP site.

Belongs to the glutamate 5-kinase family.

It localises to the cytoplasm. It catalyses the reaction L-glutamate + ATP = L-glutamyl 5-phosphate + ADP. It functions in the pathway amino-acid biosynthesis; L-proline biosynthesis; L-glutamate 5-semialdehyde from L-glutamate: step 1/2. In terms of biological role, catalyzes the transfer of a phosphate group to glutamate to form L-glutamate 5-phosphate. The protein is Glutamate 5-kinase of Listeria monocytogenes serotype 4a (strain HCC23).